A 390-amino-acid polypeptide reads, in one-letter code: Ribonuclease D (390 aa).

In terms of domain architecture, 3'-5' exonuclease spans I7–L173. The HRDC domain maps to K212 to E293.

It belongs to the RNase D family. The cofactor is a divalent metal cation.

It localises to the cytoplasm. The enzyme catalyses Exonucleolytic cleavage that removes extra residues from the 3'-terminus of tRNA to produce 5'-mononucleotides.. Functionally, exonuclease involved in the 3' processing of various precursor tRNAs. Initiates hydrolysis at the 3'-terminus of an RNA molecule and releases 5'-mononucleotides. The sequence is that of Ribonuclease D from Zymomonas mobilis subsp. mobilis (strain ATCC 31821 / ZM4 / CP4).